A 506-amino-acid polypeptide reads, in one-letter code: ATP synthase subunit alpha (506 aa).

Gly-170 to Thr-177 serves as a coordination point for ATP.

The protein belongs to the ATPase alpha/beta chains family. In terms of assembly, F-type ATPases have 2 components, CF(1) - the catalytic core - and CF(0) - the membrane proton channel. CF(1) has five subunits: alpha(3), beta(3), gamma(1), delta(1), epsilon(1). CF(0) has four main subunits: a(1), b(1), b'(1) and c(9-12).

Its subcellular location is the cellular thylakoid membrane. The catalysed reaction is ATP + H2O + 4 H(+)(in) = ADP + phosphate + 5 H(+)(out). Functionally, produces ATP from ADP in the presence of a proton gradient across the membrane. The alpha chain is a regulatory subunit. The polypeptide is ATP synthase subunit alpha (Synechococcus sp. (strain JA-3-3Ab) (Cyanobacteria bacterium Yellowstone A-Prime)).